A 110-amino-acid polypeptide reads, in one-letter code: Nucleoid-associated protein NFA_2940 (110 aa).

The protein belongs to the YbaB/EbfC family. Homodimer.

It is found in the cytoplasm. The protein localises to the nucleoid. In terms of biological role, binds to DNA and alters its conformation. May be involved in regulation of gene expression, nucleoid organization and DNA protection. The protein is Nucleoid-associated protein NFA_2940 of Nocardia farcinica (strain IFM 10152).